The following is a 324-amino-acid chain: Endochitinase A2 (324 aa).

Residues 1–20 form the signal peptide; sequence MSKLRIPILLVLFIVSCCSA. One can recognise a Chitin-binding type-1 domain in the interval 21 to 61; the sequence is EQCGTQAGGALCPGGLCCSKFGWCGSTSEYCGDGCQSQCSG. Cystine bridges form between cysteine 23-cysteine 38, cysteine 32-cysteine 44, cysteine 37-cysteine 51, and cysteine 55-cysteine 59. Catalysis depends on glutamate 133, which acts as the Proton donor. 2 disulfides stabilise this stretch: cysteine 151-cysteine 170 and cysteine 269-cysteine 301. Positions 310 to 324 are cleaved as a propeptide — removed in mature form; the sequence is SLPLSSILLDTVAAA.

It belongs to the glycosyl hydrolase 19 family. Chitinase class I subfamily.

It catalyses the reaction Random endo-hydrolysis of N-acetyl-beta-D-glucosaminide (1-&gt;4)-beta-linkages in chitin and chitodextrins.. Functionally, defense against chitin-containing fungal pathogens. This is Endochitinase A2 (CHI2) from Pisum sativum (Garden pea).